The sequence spans 218 residues: Leucine-rich repeat protein 1 (218 aa).

Residues Met1–Ala27 form the signal peptide. LRR repeat units follow at residues Glu94–Leu117, Asn119–Lys140, Leu141–Ile165, and Ser167–His190.

As to quaternary structure, interacts with HIR1.

Functionally, involved in plant defense response. In Arabidopsis thaliana (Mouse-ear cress), this protein is Leucine-rich repeat protein 1.